The sequence spans 429 residues: Glutamate-1-semialdehyde 2,1-aminomutase 2 (429 aa).

An N6-(pyridoxal phosphate)lysine modification is found at lysine 268.

The protein belongs to the class-III pyridoxal-phosphate-dependent aminotransferase family. HemL subfamily. In terms of assembly, homodimer. Pyridoxal 5'-phosphate is required as a cofactor.

Its subcellular location is the cytoplasm. The enzyme catalyses (S)-4-amino-5-oxopentanoate = 5-aminolevulinate. It participates in porphyrin-containing compound metabolism; protoporphyrin-IX biosynthesis; 5-aminolevulinate from L-glutamyl-tRNA(Glu): step 2/2. The polypeptide is Glutamate-1-semialdehyde 2,1-aminomutase 2 (Halalkalibacterium halodurans (strain ATCC BAA-125 / DSM 18197 / FERM 7344 / JCM 9153 / C-125) (Bacillus halodurans)).